Here is a 444-residue protein sequence, read N- to C-terminus: NADH-quinone oxidoreductase subunit F (444 aa).

62–71 (GRGGAGFLTG) serves as a coordination point for NAD(+). Residue 177 to 224 (GAGRYICGEETALINSLEGRRANPRFKPPFPAYVGLWGKPTCVNNVET) participates in FMN binding. Cys354, Cys357, Cys360, and Cys401 together coordinate [4Fe-4S] cluster.

This sequence belongs to the complex I 51 kDa subunit family. Composed of 13 different subunits. Subunits NuoCD, E, F, and G constitute the peripheral sector of the complex. [4Fe-4S] cluster serves as cofactor. The cofactor is FMN.

It carries out the reaction a quinone + NADH + 5 H(+)(in) = a quinol + NAD(+) + 4 H(+)(out). NDH-1 shuttles electrons from NADH, via FMN and iron-sulfur (Fe-S) centers, to quinones in the respiratory chain. Couples the redox reaction to proton translocation (for every two electrons transferred, four hydrogen ions are translocated across the cytoplasmic membrane), and thus conserves the redox energy in a proton gradient. This is NADH-quinone oxidoreductase subunit F (nuoF) from Buchnera aphidicola subsp. Baizongia pistaciae (strain Bp).